The sequence spans 282 residues: MTHWPSPAKLNLFLYITGQRADGYHTLQTLFQFLDYGDTLHIEPRHDGEIHLLTPVNGVENEDNLIVRAARLLMKVASESGRLPTGSGADISIEKRLPMGGGLGGGSSNAATVLVALNHLWQCGLSVDELAAIGLTLGADVPVFVRGHAAFAEGVGEILTPVNPPEKWYLVAHPGVSIPTPVIFKDPQLPRNTPKRSIDTLLKCEFSNDCEVIARKRFREVDAALSWLLEYAPSRLTGTGACVFAEFDTESCARQVLEQAPEWLNAFVAKGVNLSPLHRELL.

Residue lysine 9 is part of the active site. ATP is bound at residue 98 to 108 (PMGGGLGGGSS). The active site involves aspartate 140.

The protein belongs to the GHMP kinase family. IspE subfamily. Homodimer.

It catalyses the reaction 4-CDP-2-C-methyl-D-erythritol + ATP = 4-CDP-2-C-methyl-D-erythritol 2-phosphate + ADP + H(+). It participates in isoprenoid biosynthesis; isopentenyl diphosphate biosynthesis via DXP pathway; isopentenyl diphosphate from 1-deoxy-D-xylulose 5-phosphate: step 3/6. In terms of biological role, catalyzes the phosphorylation of the position 2 hydroxy group of 4-diphosphocytidyl-2C-methyl-D-erythritol. The polypeptide is 4-diphosphocytidyl-2-C-methyl-D-erythritol kinase (Salmonella paratyphi B (strain ATCC BAA-1250 / SPB7)).